The sequence spans 420 residues: Ribosome biogenesis protein WDR12 homolog (420 aa).

Positions 10 to 92 (VQVHLKTKQE…EDAIEIEYVE (83 aa)) are ubiquitin-like (UBL) domain. 7 WD repeats span residues 104 to 142 (LHDDWVSAVKARGKWILSGCYDNSLNLWTNKGKHILTIS), 143 to 185 (GHTA…NAVD), 192 to 231 (GHERGVDSVSVSPDGLRFATGSWDTMLKVWSAELDDGVEG), 250 to 288 (GHRESVSAVQWMDATTLLTGSWDYTLKVWDLSLEGIKTE), 290 to 329 (STNKSIFDASYSKLNRLILTASADKNLRLYDPRTNQGSVV), 335 to 375 (GHNA…APLY), and 379 to 417 (GHGDKVLDIDWSNPKYIVSGGVDNSVRVFKSRKALAEDT).

This sequence belongs to the WD repeat WDR12/YTM1 family.

The protein localises to the nucleus. It is found in the nucleolus. The protein resides in the nucleoplasm. Its function is as follows. Required for maturation of ribosomal RNAs and formation of the large ribosomal subunit. This chain is Ribosome biogenesis protein WDR12 homolog, found in Drosophila simulans (Fruit fly).